The sequence spans 174 residues: Adenine phosphoribosyltransferase (174 aa).

This sequence belongs to the purine/pyrimidine phosphoribosyltransferase family. In terms of assembly, homodimer.

The protein resides in the cytoplasm. It catalyses the reaction AMP + diphosphate = 5-phospho-alpha-D-ribose 1-diphosphate + adenine. Its pathway is purine metabolism; AMP biosynthesis via salvage pathway; AMP from adenine: step 1/1. Its function is as follows. Catalyzes a salvage reaction resulting in the formation of AMP, that is energically less costly than de novo synthesis. This Mycobacterium sp. (strain JLS) protein is Adenine phosphoribosyltransferase.